A 1099-amino-acid polypeptide reads, in one-letter code: Mediator of RNA polymerase II transcription subunit 5 (1099 aa).

The disordered stretch occupies residues 41–66; sequence DNDDAKTQEGSGSQDKTDVEESISKP.

The protein belongs to the Mediator complex subunit 5 family. In terms of assembly, component of the Mediator complex.

It localises to the nucleus. Its function is as follows. Component of the Mediator complex, a coactivator involved in the regulated transcription of nearly all RNA polymerase II-dependent genes. Mediator functions as a bridge to convey information from gene-specific regulatory proteins to the basal RNA polymerase II transcription machinery. Mediator is recruited to promoters by direct interactions with regulatory proteins and serves as a scaffold for the assembly of a functional preinitiation complex with RNA polymerase II and the general transcription factors. The protein is Mediator of RNA polymerase II transcription subunit 5 (NUT1) of Candida glabrata (strain ATCC 2001 / BCRC 20586 / JCM 3761 / NBRC 0622 / NRRL Y-65 / CBS 138) (Yeast).